Here is an 80-residue protein sequence, read N- to C-terminus: Defensin-like protein 18 (80 aa).

A signal peptide spans 1-29 (MAKFCTTITLILVALVLFADFEAPTIVKA). Disulfide bonds link C32–C80, C43–C64, C49–C74, and C53–C76.

Belongs to the DEFL family.

The protein localises to the secreted. In terms of biological role, confers broad-spectrum resistance to pathogens. This is Defensin-like protein 18 (PDF1.5) from Arabidopsis thaliana (Mouse-ear cress).